A 90-amino-acid chain; its full sequence is Nodulation protein NolS (90 aa).

Functionally, involved in nodulation of a particular host, M.lupulina. The protein is Nodulation protein NolS (nolS) of Sinorhizobium meliloti (strain Sm2011 / Rm2011 / 2011).